A 239-amino-acid chain; its full sequence is LexA repressor (239 aa).

The segment at 1–40 (MTEAATGPEGADPSRAARSLPGRPPGIRADSSGLTDRQRR) is disordered. Residues 58 to 78 (MREIGQAVGLSSTSSVAHQLM) constitute a DNA-binding region (H-T-H motif). Residues 89–100 (DPHRPRAYEVRG) are compositionally biased toward basic and acidic residues. A disordered region spans residues 89–116 (DPHRPRAYEVRGSDQPSAQPADTSGKPA). Catalysis depends on for autocatalytic cleavage activity residues Ser163 and Lys200.

This sequence belongs to the peptidase S24 family. Homodimer.

It catalyses the reaction Hydrolysis of Ala-|-Gly bond in repressor LexA.. Functionally, represses a number of genes involved in the response to DNA damage (SOS response), including recA and lexA. In the presence of single-stranded DNA, RecA interacts with LexA causing an autocatalytic cleavage which disrupts the DNA-binding part of LexA, leading to derepression of the SOS regulon and eventually DNA repair. The protein is LexA repressor of Streptomyces clavuligerus.